A 255-amino-acid polypeptide reads, in one-letter code: Taurine import ATP-binding protein TauB (255 aa).

Residues 2-229 (LQISHLYADY…RFVAGESSRS (228 aa)) enclose the ABC transporter domain. 34-41 (GPSGCGKT) contacts ATP.

Belongs to the ABC transporter superfamily. Taurine importer (TC 3.A.1.17.1) family. As to quaternary structure, the complex is composed of two ATP-binding proteins (TauB), two transmembrane proteins (TauC) and a solute-binding protein (TauA).

The protein resides in the cell inner membrane. It carries out the reaction taurine(out) + ATP + H2O = taurine(in) + ADP + phosphate + H(+). In terms of biological role, part of the ABC transporter complex TauABC involved in taurine import. Responsible for energy coupling to the transport system. The protein is Taurine import ATP-binding protein TauB of Shigella boydii serotype 4 (strain Sb227).